The chain runs to 468 residues: Proline--tRNA ligase (468 aa).

Belongs to the class-II aminoacyl-tRNA synthetase family. ProS type 3 subfamily. Homodimer.

The protein resides in the cytoplasm. The catalysed reaction is tRNA(Pro) + L-proline + ATP = L-prolyl-tRNA(Pro) + AMP + diphosphate. Catalyzes the attachment of proline to tRNA(Pro) in a two-step reaction: proline is first activated by ATP to form Pro-AMP and then transferred to the acceptor end of tRNA(Pro). The polypeptide is Proline--tRNA ligase (Frankia casuarinae (strain DSM 45818 / CECT 9043 / HFP020203 / CcI3)).